Reading from the N-terminus, the 103-residue chain is Large ribosomal subunit protein bL21 (103 aa).

The protein belongs to the bacterial ribosomal protein bL21 family. In terms of assembly, part of the 50S ribosomal subunit. Contacts protein L20.

This protein binds to 23S rRNA in the presence of protein L20. The sequence is that of Large ribosomal subunit protein bL21 from Pseudomonas syringae pv. syringae (strain B728a).